Reading from the N-terminus, the 390-residue chain is Galactokinase (390 aa).

33 to 36 (EHTD) contacts substrate. ATP-binding positions include serine 67 and 124-130 (GAGLSSS). 2 residues coordinate Mg(2+): serine 130 and glutamate 162. Aspartate 174 (proton acceptor) is an active-site residue. Substrate is bound at residue tyrosine 224.

The protein belongs to the GHMP kinase family. GalK subfamily.

The protein resides in the cytoplasm. It catalyses the reaction alpha-D-galactose + ATP = alpha-D-galactose 1-phosphate + ADP + H(+). It functions in the pathway carbohydrate metabolism; galactose metabolism. Catalyzes the transfer of the gamma-phosphate of ATP to D-galactose to form alpha-D-galactose-1-phosphate (Gal-1-P). This Bacillus subtilis (strain 168) protein is Galactokinase.